A 189-amino-acid polypeptide reads, in one-letter code: HGPRTase-like protein 2 (189 aa).

The protein belongs to the purine/pyrimidine phosphoribosyltransferase family. Archaeal HPRT subfamily.

Functionally, may catalyze a purine salvage reaction, the substrate is unknown. This is HGPRTase-like protein 2 from Halalkalicoccus jeotgali (strain DSM 18796 / CECT 7217 / JCM 14584 / KCTC 4019 / B3).